A 215-amino-acid polypeptide reads, in one-letter code: Large ribosomal subunit protein uL3 (215 aa).

Residues 131-144 show a composition bias toward low complexity; that stretch reads SSSRASHGNSRSHN. The disordered stretch occupies residues 131 to 150; sequence SSSRASHGNSRSHNVPGSIG. Gln153 is subject to N5-methylglutamine.

It belongs to the universal ribosomal protein uL3 family. In terms of assembly, part of the 50S ribosomal subunit. Forms a cluster with proteins L14 and L19. Post-translationally, methylated by PrmB.

Functionally, one of the primary rRNA binding proteins, it binds directly near the 3'-end of the 23S rRNA, where it nucleates assembly of the 50S subunit. This chain is Large ribosomal subunit protein uL3, found in Nitrosomonas europaea (strain ATCC 19718 / CIP 103999 / KCTC 2705 / NBRC 14298).